We begin with the raw amino-acid sequence, 660 residues long: DNA ligase (660 aa).

NAD(+) contacts are provided by residues 33 to 37 (DFVYD), 82 to 83 (SL), and E110. The N6-AMP-lysine intermediate role is filled by K112. Residues R133, E167, K281, and K305 each coordinate NAD(+). C396, C399, C412, and C417 together coordinate Zn(2+). Residues 583 to 660 (GENKLLAGKK…SFEDIKSYLD (78 aa)) form the BRCT domain.

It belongs to the NAD-dependent DNA ligase family. LigA subfamily. The cofactor is Mg(2+). It depends on Mn(2+) as a cofactor.

It catalyses the reaction NAD(+) + (deoxyribonucleotide)n-3'-hydroxyl + 5'-phospho-(deoxyribonucleotide)m = (deoxyribonucleotide)n+m + AMP + beta-nicotinamide D-nucleotide.. Functionally, DNA ligase that catalyzes the formation of phosphodiester linkages between 5'-phosphoryl and 3'-hydroxyl groups in double-stranded DNA using NAD as a coenzyme and as the energy source for the reaction. It is essential for DNA replication and repair of damaged DNA. This chain is DNA ligase, found in Borreliella burgdorferi (strain ATCC 35210 / DSM 4680 / CIP 102532 / B31) (Borrelia burgdorferi).